The following is a 517-amino-acid chain: Crotonobetaine/carnitine--CoA ligase (517 aa).

This sequence belongs to the ATP-dependent AMP-binding enzyme family.

It carries out the reaction 4-(trimethylamino)butanoate + ATP + CoA = 4-(trimethylamino)butanoyl-CoA + AMP + diphosphate. The enzyme catalyses crotonobetaine + ATP + CoA = crotonobetainyl-CoA + AMP + diphosphate. The catalysed reaction is (R)-carnitine + ATP + CoA = (R)-carnitinyl-CoA + AMP + diphosphate. The protein operates within amine and polyamine metabolism; carnitine metabolism. Its function is as follows. Catalyzes the transfer of CoA to carnitine, generating the initial carnitinyl-CoA needed for the CaiB reaction cycle. Also has activity toward crotonobetaine and gamma-butyrobetaine. The sequence is that of Crotonobetaine/carnitine--CoA ligase from Salmonella paratyphi C (strain RKS4594).